We begin with the raw amino-acid sequence, 506 residues long: MRDPLTDCPYNKVYKNLKEFSQNGENFCKQVTSVLQQRANLEISYAKGLQKLASKLSKALQNTRKSCVSSAWAWASEGMKSTADLHQKLGKAIELEAIKPTYQVLNVQEKKRKSLDNEVEKTANLVISNWNQQIKAKKKLMVSTKKHEALFQLVESSKQSMTEKEKRKLLNKLTKSTEKLEKEDENYYQKNMAGYSTRLKWENTLENCYQSILELEKERIQLLCNNLNQYSQHISLFGQTLTTCHTQIHCAISKIDIEKDIQAVMEETAILSTENKSEFLLTDYFEEDPNSAMDKERRKSLLKPKLLRLQRDIEKASKDKEGLERMLKTYSSTSSFSDAKSQKDTAALMDENNLKLDLLEANSYKLSSMLAELEQRPQPSHPCSNSIFRWREKEHTHSYVKISRPFLMKRLENIVSKASSGGQSNPGSSTPAPGAAQLSSRLCKALYSFQARQDDELNLEKGDIVIIHEKKEGGWWFGSLNGKKGHFPAAYVEELPSNAGNTATKA.

The F-BAR domain maps to 1–260 (MRDPLTDCPY…AISKIDIEKD (260 aa)). Serine 114 carries the phosphoserine modification. Positions 160 to 222 (SMTEKEKRKL…LELEKERIQL (63 aa)) form a coiled coil. Positions 292–372 (AMDKERRKSL…SYKLSSMLAE (81 aa)) constitute an REM-1 domain. The region spanning 438–497 (LSSRLCKALYSFQARQDDELNLEKGDIVIIHEKKEGGWWFGSLNGKKGHFPAAYVEELPS) is the SH3 domain. Residue serine 479 is modified to Phosphoserine.

In terms of assembly, homotrimer. Interacts with DAB2. Interacts with NOS3, DNM2, WASL and CAV1. Interacts (via SH3 domain) with DNM2; this interaction allows the recruitment of NOS3 to dynamin-positive structures. As to expression, expressed at highest levels in heart, kidney, placenta and lung, and at lowest levels in brain, thymus and spleen. Present in vascular endothelial cells and placenta. Over-expressed in placenta from women with pre-eclampsia (at protein level).

Its subcellular location is the cell membrane. It localises to the cytoplasmic vesicle. The protein resides in the cytoplasm. The protein localises to the cytoskeleton. It is found in the nucleus. In terms of biological role, multivalent adapter protein which may decrease NOS3 activity by inducing its translocation away from the plasma membrane. In Homo sapiens (Human), this protein is Nostrin.